The primary structure comprises 195 residues: Putative manganese efflux pump MntP (195 aa).

The next 6 helical transmembrane spans lie at 3–23 (LSAT…ASVG), 40–60 (GLIF…LGLL), 68–88 (WDHW…VLAG), 106–126 (VLIA…VGLA), 132–152 (ILHA…IGML), and 165–185 (AEII…YSHI).

The protein belongs to the MntP (TC 9.B.29) family.

The protein localises to the cell inner membrane. Probably functions as a manganese efflux pump. This is Putative manganese efflux pump MntP from Sodalis glossinidius (strain morsitans).